The following is a 930-amino-acid chain: MTTGFLQKIFGSRNQRLVKQYQKTVAAINALEPQIEKLTDDQLRGKTDEFRQRIAAGESLDKLLPEAFAVCREASRRVLKMRHFDVQLIGGMVLHYGKIAEMRTGEGKTLVATLPVYLNALAGRGVHVVTVNDYLAQRDAEWMARLYNFLGLSVGINLSGMEHDQKQQAYAADITYGTNNEFGFDYLRDNMVYETDARVQRALNFAVVDEVDSILIDEARTPLIISGQAEDHTELYVRMNALPPLLERQIGEEKADGTGVEKPGDYTLDEKSRQVFLTESGHEKAERLLAEWGLIGEGESLYAPQNITLMHHVYAALRAHTLFHKDQHYVVQNGEVVIVDEFTGRLMAGRRWSDGLHQAVEAKEHVKIQSENQTLASITFQNYFRMYAKLAGMTGTADTEAYEFNEIYGLETVVIPTNRPPKRIDKQDQIYKTAKERYDAVIRDIRECYERGQPVLVGTTSIENSELLSHLLTQAGLPHEVLNAKQHEREAAIVAEAGRPKRITIATNMAGRGTDIVLGGNAEKQAAFLEADDSIPPDEKARRIKQLHDEWETLHEQVKAAGGLHIIGTERHESRRIDNQLRGRAGRQGDPGSSRFYLSLDDPLLRIFAGDRVRSIMDRLKMPEGEAIEAGIVTRSIESAQRKVEARNFDIRKQLLEYDDVSNDQRKVIYQQRNELLEAHDITETISAMRHGVITEVVHQFVPAGSIEEQWDVPELEEVLRNDWQLDLAIQEMVNESSSITAEEILEAVTSAADEQYEAKVAMVGRESFSAFERSVMLQTVDRLWREHLAALDHLRQGIHLRGYAQKNPKQEYKREAFELFAAMLDAIKQEVTRIVMNVQVQSPEQLEEAAEQIEEQGGHLENVEFQHADYAESGAPVANVAVAAAATADMVGSAMTHGGAGGEMPKVGRNDPCPCGSGKKYKQCHGKLS.

Residues glutamine 87, glycine 105–threonine 109, and aspartate 515 contribute to the ATP site. Residues cysteine 914, cysteine 916, cysteine 925, and histidine 926 each coordinate Zn(2+).

This sequence belongs to the SecA family. Monomer and homodimer. Part of the essential Sec protein translocation apparatus which comprises SecA, SecYEG and auxiliary proteins SecDF-YajC and YidC. Requires Zn(2+) as cofactor.

It is found in the cell inner membrane. Its subcellular location is the cytoplasm. It catalyses the reaction ATP + H2O + cellular proteinSide 1 = ADP + phosphate + cellular proteinSide 2.. Functionally, part of the Sec protein translocase complex. Interacts with the SecYEG preprotein conducting channel. Has a central role in coupling the hydrolysis of ATP to the transfer of proteins into and across the cell membrane, serving both as a receptor for the preprotein-SecB complex and as an ATP-driven molecular motor driving the stepwise translocation of polypeptide chains across the membrane. The sequence is that of Protein translocase subunit SecA from Burkholderia vietnamiensis (strain G4 / LMG 22486) (Burkholderia cepacia (strain R1808)).